Reading from the N-terminus, the 196-residue chain is dCTP deaminase, dUMP-forming (196 aa).

DCTP-binding positions include 101–106 (KSSLGR), aspartate 119, 127–129 (TLE), glutamine 148, tyrosine 162, and glutamine 174. Glutamate 129 (proton donor/acceptor) is an active-site residue.

The protein belongs to the dCTP deaminase family. In terms of assembly, homotrimer.

The catalysed reaction is dCTP + 2 H2O = dUMP + NH4(+) + diphosphate. Its pathway is pyrimidine metabolism; dUMP biosynthesis; dUMP from dCTP: step 1/1. Functionally, bifunctional enzyme that catalyzes both the deamination of dCTP to dUTP and the hydrolysis of dUTP to dUMP without releasing the toxic dUTP intermediate. This Tropheryma whipplei (strain TW08/27) (Whipple's bacillus) protein is dCTP deaminase, dUMP-forming.